The chain runs to 427 residues: Histidine--tRNA ligase (427 aa).

The protein belongs to the class-II aminoacyl-tRNA synthetase family. Homodimer.

The protein resides in the cytoplasm. The enzyme catalyses tRNA(His) + L-histidine + ATP = L-histidyl-tRNA(His) + AMP + diphosphate + H(+). This chain is Histidine--tRNA ligase, found in Corynebacterium urealyticum (strain ATCC 43042 / DSM 7109).